The chain runs to 204 residues: Thymidylate kinase (204 aa).

ATP is bound at residue 11 to 18 (GLDKSGKT).

The protein belongs to the thymidylate kinase family.

It carries out the reaction dTMP + ATP = dTDP + ADP. The protein operates within pyrimidine metabolism; dTTP biosynthesis. In Ectromelia virus (strain Moscow) (ECTV), this protein is Thymidylate kinase (TMK).